The primary structure comprises 457 residues: Tubulin alpha chain (457 aa).

8 residues coordinate GTP: Q12, E77, S146, G150, T151, T186, N213, and N235. E77 serves as a coordination point for Mg(2+).

The protein belongs to the tubulin family. In terms of assembly, dimer of alpha and beta chains. A typical microtubule is a hollow water-filled tube with an outer diameter of 25 nm and an inner diameter of 15 nM. Alpha-beta heterodimers associate head-to-tail to form protofilaments running lengthwise along the microtubule wall with the beta-tubulin subunit facing the microtubule plus end conferring a structural polarity. Microtubules usually have 13 protofilaments but different protofilament numbers can be found in some organisms and specialized cells. It depends on Mg(2+) as a cofactor. In terms of processing, undergoes a tyrosination/detyrosination cycle, the cyclic removal and re-addition of a C-terminal tyrosine residue by the enzymes tubulin tyrosine carboxypeptidase (TTCP) and tubulin tyrosine ligase (TTL), respectively.

The protein localises to the cytoplasm. Its subcellular location is the cytoskeleton. It catalyses the reaction GTP + H2O = GDP + phosphate + H(+). In terms of biological role, tubulin is the major constituent of microtubules, a cylinder consisting of laterally associated linear protofilaments composed of alpha- and beta-tubulin heterodimers. Microtubules grow by the addition of GTP-tubulin dimers to the microtubule end, where a stabilizing cap forms. Below the cap, tubulin dimers are in GDP-bound state, owing to GTPase activity of alpha-tubulin. The polypeptide is Tubulin alpha chain (tubA) (Dictyostelium discoideum (Social amoeba)).